Reading from the N-terminus, the 171-residue chain is Putative metal-dependent hydrolase BH0277 (171 aa).

Residues His-64, His-155, and His-159 each contribute to the Zn(2+) site.

The protein belongs to the metal hydrolase YfiT family. Homodimer. Requires Zn(2+) as cofactor.

It localises to the cytoplasm. Functionally, possible metal-dependent hydrolase. The chain is Putative metal-dependent hydrolase BH0277 from Halalkalibacterium halodurans (strain ATCC BAA-125 / DSM 18197 / FERM 7344 / JCM 9153 / C-125) (Bacillus halodurans).